A 612-amino-acid chain; its full sequence is Baeyer-Villiger monooxygenase 4 (612 aa).

FAD is bound by residues Glu-99, 107–110 (TWYW), Asp-119, Tyr-125, and Ala-169. 117-119 (QCD) provides a ligand contact to NADP(+). NADP(+) is bound by residues 253-259 (TGATGVQ), 276-277 (RT), and 393-394 (KR).

Belongs to the FAD-binding monooxygenase family. The cofactor is FAD.

Functionally, catalyzes a Baeyer-Villiger oxidation reaction, i.e. the insertion of an oxygen atom into a carbon-carbon bond adjacent to a carbonyl, which converts ketones to esters or lactones using NADPH as an electron donor. Has a broad substrate scope and oxidizes different compounds including substituted and unsubstituted alicyclic, bicyclic-, aliphatic-ketones, ketones with an aromatic moiety, and sulfides. The highest activities are measured for 2- and 3-methylcyclohexanone, phenylacetone, bicyclo[3.2.0]hept-2-en-6-one and menthone. Cannot use NADH instead of NADPH. Is not active on benzaldehyde. In Dietzia sp. (strain D5), this protein is Baeyer-Villiger monooxygenase 4.